Consider the following 117-residue polypeptide: Large ribosomal subunit protein uL24 (117 aa).

Belongs to the universal ribosomal protein uL24 family. In terms of assembly, part of the 50S ribosomal subunit.

In terms of biological role, one of two assembly initiator proteins, it binds directly to the 5'-end of the 23S rRNA, where it nucleates assembly of the 50S subunit. Functionally, one of the proteins that surrounds the polypeptide exit tunnel on the outside of the subunit. The protein is Large ribosomal subunit protein uL24 of Thermosynechococcus vestitus (strain NIES-2133 / IAM M-273 / BP-1).